We begin with the raw amino-acid sequence, 333 residues long: Protein translocase subunit SecF (333 aa).

6 consecutive transmembrane segments (helical) span residues alanine 27 to isoleucine 47, valine 152 to valine 172, leucine 180 to leucine 200, threonine 207 to phenylalanine 227, threonine 253 to glycine 275, and alanine 285 to phenylalanine 307.

It belongs to the SecD/SecF family. SecF subfamily. Forms a complex with SecD. Part of the essential Sec protein translocation apparatus which comprises SecA, SecYEG and auxiliary proteins SecDF-YajC and YidC.

The protein localises to the cell inner membrane. Functionally, part of the Sec protein translocase complex. Interacts with the SecYEG preprotein conducting channel. SecDF uses the proton motive force (PMF) to complete protein translocation after the ATP-dependent function of SecA. This Rhodobacter capsulatus (strain ATCC BAA-309 / NBRC 16581 / SB1003) protein is Protein translocase subunit SecF.